A 253-amino-acid chain; its full sequence is Testis-expressed protein 47 (253 aa).

As to expression, testis-specific.

The protein is Testis-expressed protein 47 of Homo sapiens (Human).